Here is a 380-residue protein sequence, read N- to C-terminus: Alcohol dehydrogenase 1 (380 aa).

Zn(2+) is bound by residues C48, T50, H70, C100, C103, C106, C114, and C178. The an alcohol site is built by T50 and H70. T50 contacts NAD(+). Residues 203–208 (GLGAVG), D227, R232, T273, V296, 296–298 (VGV), F323, and R373 each bind NAD(+).

Belongs to the zinc-containing alcohol dehydrogenase family. Homodimer. Homotetramer. Zn(2+) is required as a cofactor.

It is found in the cytoplasm. The enzyme catalyses a primary alcohol + NAD(+) = an aldehyde + NADH + H(+). The catalysed reaction is a secondary alcohol + NAD(+) = a ketone + NADH + H(+). The protein is Alcohol dehydrogenase 1 (ADH1) of Solanum tuberosum (Potato).